The chain runs to 1014 residues: Klotho (1014 aa).

A signal peptide spans 1–34 (MPARAPPRRLPRLLLLRLLSLHLLLLTLRARCLS). Topologically, residues 35 to 983 (AEPGQGAQTW…GCGFFQTRKS (949 aa)) are extracellular. Glycosyl hydrolase-1 stretches follow at residues 59-508 (LHDT…NNGF) and 517-955 (LEGT…NNGF). 6 N-linked (GlcNAc...) asparagine glycosylation sites follow: Asn-161, Asn-285, Asn-346, Asn-609, Asn-614, and Asn-696. Residues 984–1004 (LLAFISFLVFAFVTSLALIYY) form a helical membrane-spanning segment. At 1005 to 1014 (YSKKGRRRYK) the chain is on the cytoplasmic side.

It belongs to the glycosyl hydrolase 1 family. Klotho subfamily. In terms of assembly, homodimer. Interacts with FGF23 and FGFR1. Post-translationally, N-glycosylated. As to expression, present in cortical renal tubules and the parathyroid (at protein level). Strongly expressed in kidney. Expressed at low levels in brain, lung, intestine and ovaries.

Its subcellular location is the cell membrane. The protein localises to the apical cell membrane. It is found in the secreted. It carries out the reaction a beta-D-glucuronoside + H2O = D-glucuronate + an alcohol. Functionally, may have weak glycosidase activity towards glucuronylated steroids. However, it lacks essential active site Glu residues at positions 241 and 874, suggesting it may be inactive as a glycosidase in vivo. May be involved in the regulation of calcium and phosphorus homeostasis by inhibiting the synthesis of active vitamin D. Essential factor for the specific interaction between FGF23 and FGFR1. Its function is as follows. The Klotho peptide generated by cleavage of the membrane-bound isoform may be an anti-aging circulating hormone which would extend life span by inhibiting insulin/IGF1 signaling. The chain is Klotho (Kl) from Rattus norvegicus (Rat).